Consider the following 224-residue polypeptide: MNTQFKLIGFDLDGTLVNSLPDLALSVNSALAEFNLPKAPEELVLTWIGNGAPVLIARALDWAKKQTGKVLTETEVKQVTERFNFYYGENLCNVSRLYPNVKETLETLKEKGYVLAVVTNKPTRHVQPVLAAFGIDHLFSEMLGGQSLPAIKPHPAPLYYLCGKFGFEPRQVLFVGDSKNDIIAAHAAGCAVVGLTYGYNYNIPITESNPDWVFDDFAQLLTIL.

Asp11 serves as the catalytic Nucleophile. Mg(2+)-binding residues include Asp11, Asp13, and Asp177.

The protein belongs to the HAD-like hydrolase superfamily. CbbY/CbbZ/Gph/YieH family. Mg(2+) serves as cofactor.

The catalysed reaction is 2-phosphoglycolate + H2O = glycolate + phosphate. It functions in the pathway organic acid metabolism; glycolate biosynthesis; glycolate from 2-phosphoglycolate: step 1/1. Its function is as follows. Specifically catalyzes the dephosphorylation of 2-phosphoglycolate. Is involved in the dissimilation of the intracellular 2-phosphoglycolate formed during the DNA repair of 3'-phosphoglycolate ends, a major class of DNA lesions induced by oxidative stress. The sequence is that of Phosphoglycolate phosphatase from Haemophilus influenzae (strain 86-028NP).